The following is a 216-amino-acid chain: Urease accessory protein UreG (216 aa).

Residue 25-32 (GPVGSGKT) participates in GTP binding.

The protein belongs to the SIMIBI class G3E GTPase family. UreG subfamily. In terms of assembly, homodimer. UreD, UreF and UreG form a complex that acts as a GTP-hydrolysis-dependent molecular chaperone, activating the urease apoprotein by helping to assemble the nickel containing metallocenter of UreC. The UreE protein probably delivers the nickel.

It localises to the cytoplasm. Functionally, facilitates the functional incorporation of the urease nickel metallocenter. This process requires GTP hydrolysis, probably effectuated by UreG. This is Urease accessory protein UreG from Burkholderia pseudomallei (strain 1710b).